The primary structure comprises 309 residues: MLDRLWEVRQALPLYLLVSTLGLAISCCFTLICPHVCRLIPALTTYGKAADQQEDNSLVEKISVPKKWFKHFYAIGLLTLFICLHTVHSLIYNPNYLHPVVLKILATLTRSYSIPPITPSTSILALLLISLHVARRLYETIFVSVYSDSRMNLFHYAVGIVHYIILPISIMCETQGVASKLPQLHVSIDDISLTQWAGAVLFWICNWKQHQLAEQIANTRKGPRGLIRNYAYGICFGGWFNLVSCPHFLFEICIYLSLFLVIPDAYVYRFIIMFVCINQTFAALITHSWYHKTFPKYPKSRKALIPYVL.

Helical transmembrane passes span 12–32 (LPLYLLVSTLGLAISCCFTLI), 72–92 (FYAIGLLTLFICLHTVHSLIY), 114–134 (IPPITPSTSILALLLISLHVA), 151–171 (MNLFHYAVGIVHYIILPISIM), 184–204 (LHVSIDDISLTQWAGAVLFWI), 242–262 (LVSCPHFLFEICIYLSLFLVI), and 270–290 (FIIMFVCINQTFAALITHSWY).

The protein belongs to the steroid 5-alpha reductase family. Polyprenal reductase subfamily.

The protein resides in the endoplasmic reticulum membrane. The enzyme catalyses a di-trans,poly-cis-dolichal + NADP(+) = a di-trans,poly-cis-polyprenal + NADPH + H(+). The protein operates within protein modification; protein glycosylation. Its function is as follows. Plays a key role in early steps of protein N-linked glycosylation by being involved in the conversion of polyprenol into dolichol. Acts as a polyprenal reductase that mediates the reduction of polyprenal into dolichal in a NADP-dependent mechanism. Dolichols are required for the synthesis of dolichol-linked monosaccharides and the oligosaccharide precursor used for N-glycosylation. The polypeptide is Polyprenal reductase (Caenorhabditis elegans).